A 1211-amino-acid chain; its full sequence is MNIGIAAPKWDKLSPREFLQLQELASYSTRKLQDVLREFSSPSAASTPKCIPDGDIDFDGFRRFLDAFLDCEAPLDLAKHLFVSFLKPNVTQAQLHGRALNQMAAISSTAACAPVTSHTKGSIPNINSIAELMPQCSGGGGGIGGTGGVAGAEGHAQARSSFVDKIHGITDKLHHSLGGHLSHDPSKTGSVHPMLTVTPSPLASGPSMFQASNPARRSVDSSPSHSATNHSQMSRNSSKKSSNSVNCKIDADIKLLARKLSHFDPLTLKVPLKDVVCYLSLLEAGRPEDKLEFMFRLYDTDSNGVLDTAEMDAIVNQMMAVAEYLGWDVSELRPILQEMMVEIDYDADGTVSLDEWQRGGMTTIPLLVLLGVDSTTLKEDGIHVWRLKHFSKPAYCNLCLNMLVGLGKKGLCCVLCKYTVHERCVQHAPASCITTYVKSKKPKCGGDLLHHWVEGNCYGRCSKCRKRIKAYHGITGLTCRWCHMMLHNRCASSVKKECTLGEYSELIVPPTAICPAVLDRQRSVNQAHKKSQMHHHQATHFQITPPDELSCPLLVFVNPKSGGRQGDRILRKFQYMLNPRQVYDLSKGGPKEGLTLFKDLPRFRVICCGGDGTVGWVLEAMDSIELASQPAIGVIPLGTGNDLARCLRWGGGYEGENIPKLMDKFRRASTVMLDRWSIEVTNTPHSDDMRPKVTLHSNMQKVIELSQSVVVDKSLMERFEEIQRQSKQVATSMGTAASSTSIMMASKTETEMETMATMEFGSSTTTTNRTTTTKSISMSTFETQCLQQTLRTAMSSSSSNTSSGSPCNGNQDAETEVDSHAAAAADVREKSVPRRSGETEKQSLETLLLQHKQQMQQQQQQQQQGVTSLAVEEAATATPVGSNQSDNSSQRNKQNNILKQQITLSLDLSDHEDEPKDDGGGAGDGTKSNGNSIPATPATPITPTTPNAASSVLQQQQQQHLQFEQQQKPIKVQSDKDCTVPYNIINNYFSVGVDAAICVKFHLEREKNPHKFNSRMKNKLWYFEYATSETFAASCKNLHESIEIVCDGVALDLANGPHLQGVALLNIPYTHGGSNLWGEHLSQKRIRKSAGPFGKSKKLRAGDKEFSATSFNSVDLSVAIQDFGDRLIEVIGLENCLHMGQVRTGLRASGRRLAQCSEVIIKTKKTFPMQIDGEPWMQMPCTIKVTHKNQVPMLMAPRSEKGRGFFNLLCS.

The disordered stretch occupies residues 174-244 (HHSLGGHLSH…RNSSKKSSNS (71 aa)). Polar residues predominate over residues 197 to 230 (VTPSPLASGPSMFQASNPARRSVDSSPSHSATNH). Over residues 231–244 (SQMSRNSSKKSSNS) the composition is skewed to low complexity. EF-hand domains are found at residues 286 to 321 (RPED…MMAV) and 331 to 366 (ELRP…TIPL). Residues Asp299, Asp301, Asn303, Glu310, Asp344, Asp346, Asp348, Thr350, and Glu355 each contribute to the Ca(2+) site. 2 Phorbol-ester/DAG-type zinc fingers span residues 382 to 432 (IHVW…PASC) and 449 to 498 (LHHW…KKEC). Positions 548–682 (ELSCPLLVFV…LDRWSIEVTN (135 aa)) constitute a DAGKc domain. Disordered stretches follow at residues 789–841 (TLRT…ETEK), 874–893 (AATA…QRNK), and 910–958 (DHED…QQQQ). Low complexity predominate over residues 795 to 805 (SSSSSNTSSGS). Positions 826–841 (DVREKSVPRRSGETEK) are enriched in basic and acidic residues. Polar residues predominate over residues 879 to 893 (PVGSNQSDNSSQRNK). The segment covering 931-958 (NSIPATPATPITPTTPNAASSVLQQQQQ) has biased composition (low complexity).

Belongs to the eukaryotic diacylglycerol kinase family. In 10-11 hours embryos, expression is abundant in a limited number of cells in the procephalic region and in the ventral nerve cord. Predominantly expressed in the adult nervous system and muscle: including compound eyes, brain cortex, fibrillar muscle, and tubular muscle.

It carries out the reaction a 1,2-diacyl-sn-glycerol + ATP = a 1,2-diacyl-sn-glycero-3-phosphate + ADP + H(+). In terms of biological role, upon cell stimulation converts the second messenger diacylglycerol into phosphatidate, initiating the resynthesis of phosphatidylinositols and attenuating protein kinase C activity. May have a role in the development of the embryonic nervous system and the function of the adult nervous system and muscle; regulating signal transduction in neurons. The sequence is that of Diacylglycerol kinase 1 (Dgk) from Drosophila melanogaster (Fruit fly).